The sequence spans 290 residues: Triplex capsid protein 1 (290 aa).

Belongs to the herpesviridae TRX1 protein family. In terms of assembly, interacts with TRX2, MCP and capsid vertex component 2/CVC2.

The protein resides in the virion. It is found in the host nucleus. Functionally, structural component of the T=16 icosahedral capsid. The capsid is composed of pentamers and hexamers of major capsid protein/MCP, which are linked together by heterotrimers called triplexes. These triplexes are formed by a single molecule of triplex protein 1/TRX1 and two copies of triplex protein 2/TRX2. Additionally, TRX1 is required for efficient transport of TRX2 to the nucleus, which is the site of capsid assembly. This chain is Triplex capsid protein 1, found in Human cytomegalovirus (strain AD169) (HHV-5).